The following is a 255-amino-acid chain: Indole-3-glycerol phosphate synthase (255 aa).

The protein belongs to the TrpC family.

It catalyses the reaction 1-(2-carboxyphenylamino)-1-deoxy-D-ribulose 5-phosphate + H(+) = (1S,2R)-1-C-(indol-3-yl)glycerol 3-phosphate + CO2 + H2O. Its pathway is amino-acid biosynthesis; L-tryptophan biosynthesis; L-tryptophan from chorismate: step 4/5. The polypeptide is Indole-3-glycerol phosphate synthase (Streptococcus pneumoniae (strain Hungary19A-6)).